The chain runs to 1038 residues: Ribosome quality control complex subunit 2 (1038 aa).

Positions 350 to 383 form a coiled coil; the sequence is ALRIQNQESQAQKKIDDARAENDRKIQALLDVQE. Disordered regions lie at residues 459-499, 708-824, and 877-898; these read LNTS…MKRK, KTSG…DEPG, and QRKK…KREK. Residues 713 to 768 are a coiled coil; the sequence is EDNGDDDEEEEEEEEEEEEEEEEEEEEEEEEKEEEEKEEEQQQDEDDSNEVNGLEK. The segment covering 714 to 761 has biased composition (acidic residues); the sequence is DNGDDDEEEEEEEEEEEEEEEEEEEEEEEEKEEEEKEEEQQQDEDDSN. Residues 780-794 are compositionally biased toward basic and acidic residues; the sequence is SFEHDNLEKDIEKHC. Residues 795–805 are compositionally biased toward polar residues; the sequence is TISSDTDSDSG. S797 is modified (phosphoserine). A coiled-coil region spans residues 830 to 912; it reads IENINSNVRG…QALKFTKKEK (83 aa). The segment covering 877–894 has biased composition (basic and acidic residues); sequence QRKKEEIMKREVREDRKN.

This sequence belongs to the NEMF family. In terms of assembly, component of the ribosome quality control complex (RQC), composed of the E3 ubiquitin ligase RKR1/LTN1, RQC1 and RQC2, as well as CDC48 and its ubiquitin-binding cofactors associated with the 60S ribosomal subunit. RQC2 binds to the 40S-binding surface of tRNAs.

The protein resides in the cytoplasm. Functionally, key component of the ribosome quality control complex (RQC), a ribosome-associated complex that mediates the extraction of incompletely synthesized nascent chains from stalled ribosomes as well as their ubiquitin-mediated proteasomal degradation. Thereby, frees 60S subunit ribosomes from the stalled translation complex and prevents the accumulation of nascent polypeptide chains that are potentially toxic for the cell. Within the RQC complex, RQC2 specifically binds stalled 60S ribosomal subunits by recognizing an exposed, nascent chain-conjugated tRNA moiety and promotes the recruitment of RKR1/LTN1 to stalled 60S subunits. Following binding to stalled 60S ribosomal subunits, RQC2 mediates CAT tailing by recruiting alanine- and threonine-charged tRNA to the A-site and directing the elongation of stalled nascent chains independently of mRNA or 40S subunits, leading to non-templated C-terminal Ala and Thr extensions (CAT tails). CAT tails promote the RKR1/LTN1-mediated ubiquitination of incompletely synthesized nascent polypeptides: CAT tailing facilitates RKR1/LTN1-dependent ubiquitination by exposing lysine residues that would otherwise remain buried in the ribosomal exit tunnel. Following ubiquitination, incompletely synthesized nascent polypeptides are recognized by CDC48 and degraded by the proteasome. CAT-tailed proteins tend to aggregate and sequester chaperones and can induce proteotoxic stress; their RKR1/LTN1-dependent ubiquitination and degradation is required to prevent proteotoxic stress. The chain is Ribosome quality control complex subunit 2 from Saccharomyces cerevisiae (strain ATCC 204508 / S288c) (Baker's yeast).